The primary structure comprises 605 residues: Glucose oxidase (605 aa).

The first 16 residues, 1–16 (MKTILSSSLVVSMAAA), serve as a signal peptide directing secretion. Residues L51 and T52 each coordinate FAD. Residue N65 is glycosylated (N-linked (GlcNAc...) asparagine). E72 is an FAD binding site. N111 is a glycosylation site (N-linked (GlcNAc...) asparagine). Positions 125, 129, 130, and 132 each coordinate FAD. C186 and C228 form a disulfide bridge. A glycan (N-linked (GlcNAc...) asparagine) is linked at N190. Residue V272 participates in FAD binding. 4 N-linked (GlcNAc...) asparagine glycosylation sites follow: N280, N377, N410, and N495. Residue H538 is the Proton acceptor of the active site. O2 is bound by residues R559 and V560. 2 residues coordinate FAD: G571 and M583.

This sequence belongs to the GMC oxidoreductase family. Homodimer. Requires FAD as cofactor.

It is found in the secreted. It localises to the cell wall. The protein localises to the cytoplasm. Its subcellular location is the extracellular space. The protein resides in the extracellular matrix. It catalyses the reaction beta-D-glucose + O2 = D-glucono-1,5-lactone + H2O2. Its function is as follows. Glucose oxidase catalyzes the oxidation of beta-D-glucose to D-glucono-delta-lactone and hydrogen peroxide in the presence of molecular oxygen. Acts as a critical factor modulating pathogenicity by controlling transcription of genes important for fungal secondary metabolism and infection such as those coding for enzymes involved in degradation of the host cell wall. In Aspergillus carbonarius (strain ITEM 5010), this protein is Glucose oxidase.